Reading from the N-terminus, the 427-residue chain is Glucose-1-phosphate adenylyltransferase (427 aa).

Residues Y121, G186, 201–202 (EK), and S219 contribute to the alpha-D-glucose 1-phosphate site.

It belongs to the bacterial/plant glucose-1-phosphate adenylyltransferase family. In terms of assembly, homotetramer.

The enzyme catalyses alpha-D-glucose 1-phosphate + ATP + H(+) = ADP-alpha-D-glucose + diphosphate. Its pathway is glycan biosynthesis; glycogen biosynthesis. Involved in the biosynthesis of ADP-glucose, a building block required for the elongation reactions to produce glycogen. Catalyzes the reaction between ATP and alpha-D-glucose 1-phosphate (G1P) to produce pyrophosphate and ADP-Glc. The protein is Glucose-1-phosphate adenylyltransferase of Corynebacterium diphtheriae (strain ATCC 700971 / NCTC 13129 / Biotype gravis).